The chain runs to 207 residues: Small ribosomal subunit protein uS4 (207 aa).

The disordered stretch occupies residues 31–55; that stretch reads KCKLDSKPGQHGRTSGARTSDYGTQ. Residues 42 to 53 are compositionally biased toward polar residues; it reads GRTSGARTSDYG. Positions 97-160 constitute an S4 RNA-binding domain; that stretch reads SRLDNVVYRM…KKQARIVEAL (64 aa).

The protein belongs to the universal ribosomal protein uS4 family. In terms of assembly, part of the 30S ribosomal subunit. Contacts protein S5. The interaction surface between S4 and S5 is involved in control of translational fidelity.

Its function is as follows. One of the primary rRNA binding proteins, it binds directly to 16S rRNA where it nucleates assembly of the body of the 30S subunit. With S5 and S12 plays an important role in translational accuracy. In Burkholderia thailandensis (strain ATCC 700388 / DSM 13276 / CCUG 48851 / CIP 106301 / E264), this protein is Small ribosomal subunit protein uS4.